Consider the following 317-residue polypeptide: MSNDRLLQNVVSILLMTGYNVSERCEIRPRSFDLMTSKGENLLVIKVVSQIDSVNEDIAWDLDKIARHLHAVPLIIGERARDVALERGAIYLRYGINAVSSATLYDYLAEGELPLVYASPGGLYVNIDAERLRTLREEQAMSLGDLAHALGVSRRTISKYEGGMGTTLEMAMRLEEFFNDDIVMPIDLLHYTPAEEEHVPASLASGHNPESDAQPKRPEDHLRSIGINVQELRRAPFHAFAMFENKTILTCYGSPQKTVQRAELVGNISQITGTHSLCVVSDYRKEKKIGKTLVIGEERLKNVEDGEDLLEMVTEEK.

The region spanning 132-189 is the HTH cro/C1-type domain; it reads LRTLREEQAMSLGDLAHALGVSRRTISKYEGGMGTTLEMAMRLEEFFNDDIVMPIDLL. Positions 143–162 form a DNA-binding region, H-T-H motif; that stretch reads LGDLAHALGVSRRTISKYEG. The segment at 199-219 is disordered; sequence VPASLASGHNPESDAQPKRPE. Basic and acidic residues predominate over residues 209 to 219; sequence PESDAQPKRPE.

This Methanocorpusculum labreanum (strain ATCC 43576 / DSM 4855 / Z) protein is Putative HTH-type transcriptional regulatory protein Mlab_0160.